A 380-amino-acid polypeptide reads, in one-letter code: Cytochrome b (380 aa).

4 helical membrane passes run 34 to 54, 78 to 99, 114 to 134, and 179 to 199; these read FGSLLGICLATQILTGLLLAM, WLIRNLHANGASFFFICIYLHI, WNTGILLLLTLMATAFVGYVL, and FFALHFLLPFVIAGLTLIHLT. Heme b contacts are provided by histidine 84 and histidine 98. Residues histidine 183 and histidine 197 each contribute to the heme b site. Histidine 202 is a binding site for a ubiquinone. The next 4 helical transmembrane spans lie at 227-247, 289-309, 321-341, and 348-368; these read LKDILGFMLMFLSLTTLALFS, LGGVLALAASVLMMFLSPLLH, LSQLLFWTLVANLFILTWVGS, and FIIIGQLASFTYFTILLILLP.

It belongs to the cytochrome b family. The cytochrome bc1 complex contains 11 subunits: 3 respiratory subunits (MT-CYB, CYC1 and UQCRFS1), 2 core proteins (UQCRC1 and UQCRC2) and 6 low-molecular weight proteins (UQCRH/QCR6, UQCRB/QCR7, UQCRQ/QCR8, UQCR10/QCR9, UQCR11/QCR10 and a cleavage product of UQCRFS1). This cytochrome bc1 complex then forms a dimer. The cofactor is heme b.

It localises to the mitochondrion inner membrane. Functionally, component of the ubiquinol-cytochrome c reductase complex (complex III or cytochrome b-c1 complex) that is part of the mitochondrial respiratory chain. The b-c1 complex mediates electron transfer from ubiquinol to cytochrome c. Contributes to the generation of a proton gradient across the mitochondrial membrane that is then used for ATP synthesis. The chain is Cytochrome b (MT-CYB) from Pelagodroma marina (White-faced storm-petrel).